Reading from the N-terminus, the 633-residue chain is MEKYDYSELGLKAGLEIHQQLDSKEKLFCRCPTLIRDIGDSDFEFFRYLRATESEMGEKDRAAVEQTKIRRKYIYKAYDTTCLIENDEEPPRELNKEALDISLGVSKLFNMKPVDQMHVMRKIVVDGSNTSGFQRTAFLASDGYIETSEGRCGIDSLCVEEEAAQKIEEKGDSIVYSLDRLGIPLVEIATAPDIRSPRHAREVAEYIGMVLRSTGKVKRGLGTIRQDVNISIARGERVEIKGVQALDLIEDIVRREVERQLNLLFIRQELLERKAFVCEEIYDVTGLFMDTKSKVLQKGVKKGSILAALLKKFNRLVGKEVQPGRRLGTEFSDRAKTAGVGGLFHTDELPNYGITEKEVQAVKDAIGAGPEDAFVMVADEPEKARLAIEAVINRAKEAIEGIPEETRKALPDGNTAYMRPLPGAARMYPETDVPQIEISQEYFDSIKPPELLTKRAKRFASESGLNKELAEKVAYSRYLPLFEILLETYTKDANVNSTLIARTLVGIVPEIRRNGVETDNLTDEHFKGLFAAISNQEIAKEAIQDLLTALAKEPELTVQEAISKLGLSAFDPEEVENFIKQMVMEKGDFIKDKGPSALGPLMGIVMKEYRGTVDGKILSHMLKKEIDNFIGQG.

The protein belongs to the GatB/GatE family. GatE subfamily. Heterodimer of GatD and GatE.

The catalysed reaction is L-glutamyl-tRNA(Gln) + L-glutamine + ATP + H2O = L-glutaminyl-tRNA(Gln) + L-glutamate + ADP + phosphate + H(+). Functionally, allows the formation of correctly charged Gln-tRNA(Gln) through the transamidation of misacylated Glu-tRNA(Gln) in organisms which lack glutaminyl-tRNA synthetase. The reaction takes place in the presence of glutamine and ATP through an activated gamma-phospho-Glu-tRNA(Gln). The GatDE system is specific for glutamate and does not act on aspartate. The sequence is that of Glutamyl-tRNA(Gln) amidotransferase subunit E from Methanosarcina acetivorans (strain ATCC 35395 / DSM 2834 / JCM 12185 / C2A).